The following is a 384-amino-acid chain: Chaperone protein DnaJ (384 aa).

In terms of domain architecture, J spans 4 to 68; the sequence is DFYDVLGVSR…EKRQMYDQLG (65 aa). Disordered stretches follow at residues 74-105 and 113-132; these read QAQK…GMGG and NNLF…QGRD. The segment covering 79–105 has biased composition (gly residues); that stretch reads GAGGGGGGRGQGNPFGGGGNPFGGMGG. Residues 147 to 229 form a CR-type zinc finger; sequence GVERDVTIRR…CRGSGRVRRT (83 aa). Cysteine 160, cysteine 163, cysteine 177, cysteine 180, cysteine 203, cysteine 206, cysteine 217, and cysteine 220 together coordinate Zn(2+). CXXCXGXG motif repeat units follow at residues 160-167, 177-184, 203-210, and 217-224; these read CPECDGEG, CSECNGSG, CRACGGEG, and CSECRGSG.

The protein belongs to the DnaJ family. Homodimer. The cofactor is Zn(2+).

It is found in the cytoplasm. Its function is as follows. Participates actively in the response to hyperosmotic and heat shock by preventing the aggregation of stress-denatured proteins and by disaggregating proteins, also in an autonomous, DnaK-independent fashion. Unfolded proteins bind initially to DnaJ; upon interaction with the DnaJ-bound protein, DnaK hydrolyzes its bound ATP, resulting in the formation of a stable complex. GrpE releases ADP from DnaK; ATP binding to DnaK triggers the release of the substrate protein, thus completing the reaction cycle. Several rounds of ATP-dependent interactions between DnaJ, DnaK and GrpE are required for fully efficient folding. Also involved, together with DnaK and GrpE, in the DNA replication of plasmids through activation of initiation proteins. This chain is Chaperone protein DnaJ, found in Haloferax mediterranei (strain ATCC 33500 / DSM 1411 / JCM 8866 / NBRC 14739 / NCIMB 2177 / R-4) (Halobacterium mediterranei).